The sequence spans 467 residues: L-histidine transporter HutT (467 aa).

13 helical membrane-spanning segments follow: residues 18-38, 39-59, 71-91, 99-119, 125-145, 155-175, 200-220, 245-265, 280-300, 334-354, 358-378, 402-422, and 429-449; these read FMAL…SAIQ, MAGP…FMVM, VAGS…GFIL, MVIV…FWFP, IWVL…VKVF, LKVG…AFGF, VGGL…IEII, ILLF…WPQI, GIGS…ISAI, WMTV…NYLI, VFLL…LMIL, FWPY…GVLG, and AALI…LLWC.

It belongs to the amino acid-polyamine-organocation (APC) superfamily. Amino acid transporter (AAT) (TC 2.A.3.1) family.

The protein resides in the cell inner membrane. The enzyme catalyses L-histidine(out) + n H(+)(out) = L-histidine(in) + n H(+)(in). With respect to regulation, transport activity is inhibited by the proton ionophores carbonyl cyanide m-chlorophenyl hydrazine (CCCP) and 2,4-dinitrophenol (DNP), but not by valinomycin, nigericin and nonactin. Uptake is reduced in the presence of the sulfhydryl reagent N-ethylmaleimide (NEM). Uptake is not affected by arginine, lysine, proline or compounds structurally related to histidine such as imidazole, 3-amino-1,2,4-triazole and urocanate. Only 1,2,4-triazolyl-3-alanine reduces the rate of L-histidine uptake significantly. In terms of biological role, major high-affinity histidine transporter. Binds and catalyzes the uptake of histidine into the cell. Functions as an histidine:proton symporter with high specificity for histidine. In Pseudomonas putida (strain ATCC 47054 / DSM 6125 / CFBP 8728 / NCIMB 11950 / KT2440), this protein is L-histidine transporter HutT.